Here is a 224-residue protein sequence, read N- to C-terminus: UPF0758 protein XF_0148 (224 aa).

The MPN domain maps to 102–224; sequence SIHDPISAGR…PVSFAEHGWL (123 aa). Zn(2+)-binding residues include His-173, His-175, and Asp-186. A JAMM motif motif is present at residues 173–186; it reads HNHPSGNREPSPAD.

Belongs to the UPF0758 family.

This is UPF0758 protein XF_0148 from Xylella fastidiosa (strain 9a5c).